Consider the following 91-residue polypeptide: Large ribosomal subunit protein eL43 (91 aa).

Residues 38-59 (CNFCGKDSLKRKAAGIWECKAC) form a C4-type zinc finger.

Belongs to the eukaryotic ribosomal protein eL43 family.

This Schistosoma mansoni (Blood fluke) protein is Large ribosomal subunit protein eL43.